Consider the following 100-residue polypeptide: Small ribosomal subunit protein bS20 (100 aa).

Positions 1–22 (MASGKPKKKNPRLASGRKRARQ) are enriched in basic residues. The tract at residues 1 to 26 (MASGKPKKKNPRLASGRKRARQGLKL) is disordered.

Belongs to the bacterial ribosomal protein bS20 family.

Functionally, binds directly to 16S ribosomal RNA. In Acidovorax ebreus (strain TPSY) (Diaphorobacter sp. (strain TPSY)), this protein is Small ribosomal subunit protein bS20.